A 127-amino-acid chain; its full sequence is Anti-adapter protein IraD (127 aa).

The protein belongs to the GpW/Gp25 family. IraD subfamily. Interacts with RssB.

It is found in the cytoplasm. In terms of biological role, inhibits RpoS proteolysis by regulating RssB activity, thereby increasing the stability of the sigma stress factor RpoS during oxidative stress. Its effect on RpoS stability is due to its interaction with RssB, which probably blocks the interaction of RssB with RpoS, and the consequent delivery of the RssB-RpoS complex to the ClpXP protein degradation pathway. The chain is Anti-adapter protein IraD from Escherichia coli O127:H6 (strain E2348/69 / EPEC).